The primary structure comprises 99 residues: MYGLINVGFGNVIIGDRVIAIVNPESAPLKRLKEVAKEEGKLIDATYGRKTRAIVITDSNHVILSAIQPETIASRFMQTFTDIEKLLEEIRQAERRTEE.

Belongs to the RemA family.

This chain is Putative regulatory protein Kole_1849, found in Kosmotoga olearia (strain ATCC BAA-1733 / DSM 21960 / TBF 19.5.1).